Reading from the N-terminus, the 218-residue chain is Zinc finger BED domain-containing protein 2 (218 aa).

Positions M1–G11 are enriched in acidic residues. The tract at residues M1–E24 is disordered. The BED-type zinc finger occupies T52–S113. Zn(2+)-binding residues include C78, C81, H101, and H106. The segment at S104–G137 is disordered. Positions M105–G114 are enriched in basic and acidic residues.

As to expression, expressed in keratinocytes.

Its subcellular location is the nucleus. Functionally, transcriptional regulator which has intrinsic repressor activity and which competes with the transcriptional activator IRF1 for binding to the 5'-[CA]GAA[AC]C[CT]-3' consensus sequence in gene promoters. May thereby play a role in keratinocyte differentiation. This is Zinc finger BED domain-containing protein 2 (ZBED2) from Homo sapiens (Human).